Consider the following 615-residue polypeptide: UvrABC system protein C (615 aa).

The GIY-YIG domain maps to 12–91; it reads EKPGVYIMKD…IKKYKPKYNV (80 aa). Residues 203 to 238 enclose the UVR domain; the sequence is DWLIQKLKEDMKKAAEELRFEEAARIRDQIFAIERT.

It belongs to the UvrC family. Interacts with UvrB in an incision complex.

The protein localises to the cytoplasm. The UvrABC repair system catalyzes the recognition and processing of DNA lesions. UvrC both incises the 5' and 3' sides of the lesion. The N-terminal half is responsible for the 3' incision and the C-terminal half is responsible for the 5' incision. The sequence is that of UvrABC system protein C from Thermoanaerobacter pseudethanolicus (strain ATCC 33223 / 39E) (Clostridium thermohydrosulfuricum).